Reading from the N-terminus, the 377-residue chain is Chaperone protein DnaJ (377 aa).

A J domain is found at 5–70 (DYYQILGIPK…EKRSAYDQYG (66 aa)). Residues 132 to 210 (GIKKEIQIPT…CHGQGRVETY (79 aa)) form a CR-type zinc finger. Zn(2+) contacts are provided by Cys145, Cys148, Cys162, Cys165, Cys184, Cys187, Cys198, and Cys201. CXXCXGXG motif repeat units lie at residues 145-152 (CKTCYGSG), 162-169 (CSTCHGKG), 184-191 (CPTCHGKG), and 198-205 (CNLCHGQG).

Belongs to the DnaJ family. Homodimer. Requires Zn(2+) as cofactor.

It localises to the cytoplasm. In terms of biological role, participates actively in the response to hyperosmotic and heat shock by preventing the aggregation of stress-denatured proteins and by disaggregating proteins, also in an autonomous, DnaK-independent fashion. Unfolded proteins bind initially to DnaJ; upon interaction with the DnaJ-bound protein, DnaK hydrolyzes its bound ATP, resulting in the formation of a stable complex. GrpE releases ADP from DnaK; ATP binding to DnaK triggers the release of the substrate protein, thus completing the reaction cycle. Several rounds of ATP-dependent interactions between DnaJ, DnaK and GrpE are required for fully efficient folding. Also involved, together with DnaK and GrpE, in the DNA replication of plasmids through activation of initiation proteins. The chain is Chaperone protein DnaJ from Buchnera aphidicola subsp. Acyrthosiphon pisum (strain Tuc7).